A 259-amino-acid chain; its full sequence is 5'-nucleotidase SurE (259 aa).

Residues aspartate 13, aspartate 14, serine 44, and asparagine 101 each contribute to the a divalent metal cation site.

This sequence belongs to the SurE nucleotidase family. It depends on a divalent metal cation as a cofactor.

The protein localises to the cytoplasm. The enzyme catalyses a ribonucleoside 5'-phosphate + H2O = a ribonucleoside + phosphate. Nucleotidase that shows phosphatase activity on nucleoside 5'-monophosphates. The protein is 5'-nucleotidase SurE of Flavobacterium johnsoniae (strain ATCC 17061 / DSM 2064 / JCM 8514 / BCRC 14874 / CCUG 350202 / NBRC 14942 / NCIMB 11054 / UW101) (Cytophaga johnsonae).